We begin with the raw amino-acid sequence, 172 residues long: Adenine phosphoribosyltransferase (172 aa).

The protein belongs to the purine/pyrimidine phosphoribosyltransferase family. In terms of assembly, homodimer.

Its subcellular location is the cytoplasm. The catalysed reaction is AMP + diphosphate = 5-phospho-alpha-D-ribose 1-diphosphate + adenine. It functions in the pathway purine metabolism; AMP biosynthesis via salvage pathway; AMP from adenine: step 1/1. In terms of biological role, catalyzes a salvage reaction resulting in the formation of AMP, that is energically less costly than de novo synthesis. The polypeptide is Adenine phosphoribosyltransferase (Streptococcus agalactiae serotype III (strain NEM316)).